Here is a 327-residue protein sequence, read N- to C-terminus: Vacuolar protein sorting-associated protein 26A (327 aa).

Positions 305 to 327 (RNFHQRYESPEPRPSLSAEQPEM) are disordered.

Belongs to the VPS26 family. Component of the heterotrimeric retromer cargo-selective complex (CSC) which is believed to associate with variable sorting nexins to form functionally distinct retromer complex variants.

It is found in the cytoplasm. The protein localises to the endosome membrane. The protein resides in the early endosome. Its function is as follows. Acts as a component of the retromer cargo-selective complex (CSC). The CSC is believed to be the core functional component of retromer or respective retromer complex variants acting to prevent missorting of selected transmembrane cargo proteins into the lysosomal degradation pathway. Retromer mediates retrograde transport of cargo proteins from endosomes to the trans-Golgi network (TGN). This chain is Vacuolar protein sorting-associated protein 26A (vps26a), found in Danio rerio (Zebrafish).